A 293-amino-acid polypeptide reads, in one-letter code: MSQVRSKSQQGKRQAKPQEVVPATILTEQLSTYAFGTVTAGAVMVAVAAWMGGSLASIDERIQGGLDATAKSAGFTVTKISIEGLDPRTKADVLNAVAIPVDSNMFRADPFVIKERIEASVENVSEVRVLRQWPNDIWILAENRRPLALWQTDGEWKVVDQVGKPMDGEDPAEYVELPRVVGPAGGYAAPELLAQLKLHPQISEHLEVAMRVGGRRWDLRLDSGLEIALPEDAQVDEALLAVYNLDEATGVLAEDSEVTRIDARDLERFAVGLGEARAAYDQSSQIDDKSGGA.

Over 1-29 the chain is Cytoplasmic; it reads MSQVRSKSQQGKRQAKPQEVVPATILTEQ. The chain crosses the membrane as a helical span at residues 30–52; the sequence is LSTYAFGTVTAGAVMVAVAAWMG. The Periplasmic portion of the chain corresponds to 53–293; sequence GSLASIDERI…SQIDDKSGGA (241 aa). The POTRA domain occupies 75 to 144; the sequence is FTVTKISIEG…NDIWILAENR (70 aa).

The protein belongs to the FtsQ/DivIB family. FtsQ subfamily.

The protein resides in the cell inner membrane. Its function is as follows. Essential cell division protein. The protein is Cell division protein FtsQ of Hirschia baltica (strain ATCC 49814 / DSM 5838 / IFAM 1418).